A 471-amino-acid chain; its full sequence is MHPGVLAAFLFLSWTHCRALPLPSGGDEDDLSEEDLQFAERYLRSYYHPTNLAGILKENAASSMTERLREMQSFFGLEVTGKLDDNTLDVMKKPRCGVPDVGEYNVFPRTLKWSKMNLTYRIVNYTPDMTHSEVEKAFKKAFKVWSDVTPLNFTRLHDGIADIMISFGIKEHGDFYPFDGPSGLLAHAFPPGPNYGGDAHFDDDETWTSSSKGYNLFLVAAHEFGHSLGLDHSKDPGALMFPIYTYTGKSHFMLPDDDVQGIQSLYGPGDEDPNPKHPKTPDKCDPSLSLDAITSLRGETMIFKDRFFWRLHPQQVDAELFLTKSFWPELPNRIDAAYEHPSHDLIFIFRGRKFWALNGYDILEGYPKKISELGLPKEVKKISAAVHFEDTGKTLLFSGNQVWRYDDTNHIMDKDYPRLIEEDFPGIGDKVDAVYEKNGYIYFFNGPIQFEYSIWSNRIVRVMPANSILWC.

Residues 1–19 form the signal peptide; it reads MHPGVLAAFLFLSWTHCRA. Residues 20 to 103 constitute a propeptide, activation peptide; that stretch reads LPLPSGGDED…PRCGVPDVGE (84 aa). Positions 94–101 match the Cysteine switch motif; it reads PRCGVPDV. A Zn(2+)-binding site is contributed by cysteine 96. Asparagine 117 carries N-linked (GlcNAc...) asparagine glycosylation. Aspartate 128 lines the Ca(2+) pocket. Residue asparagine 152 is glycosylated (N-linked (GlcNAc...) asparagine). Residue aspartate 162 participates in Ca(2+) binding. Residues histidine 172 and aspartate 174 each coordinate Zn(2+). The tract at residues 176–246 is interaction with TIMP2; the sequence is YPFDGPSGLL…GALMFPIYTY (71 aa). Residues aspartate 179, glycine 180, serine 182, and leucine 184 each contribute to the Ca(2+) site. Histidine 187 is a binding site for Zn(2+). Asparagine 194, glycine 196, and aspartate 198 together coordinate Ca(2+). Histidine 200 is a Zn(2+) binding site. The Ca(2+) site is built by aspartate 202, aspartate 203, and glutamate 205. Histidine 222 lines the Zn(2+) pocket. Glutamate 223 is an active-site residue. Zn(2+) is bound by residues histidine 226, histidine 232, and methionine 240. Positions 263–284 are disordered; the sequence is QSLYGPGDEDPNPKHPKTPDKC. Residues 268–471 form an interaction with collagen region; it reads PGDEDPNPKH…VMPANSILWC (204 aa). The segment covering 273–284 has biased composition (basic and acidic residues); sequence PNPKHPKTPDKC. Hemopexin repeat units follow at residues 281–330, 331–377, 379–427, and 428–471; these read PDKC…WPEL, PNRI…GLPK, VKKI…FPGI, and GDKV…ILWC. Cysteines 284 and 471 form a disulfide. Ca(2+) is bound by residues aspartate 291, isoleucine 293, aspartate 335, and alanine 337. Residue tyrosine 366 is modified to Phosphotyrosine; by PKDCC. Ca(2+)-binding residues include serine 383, alanine 385, aspartate 432, and valine 434.

It belongs to the peptidase M10A family. In terms of assembly, monomer. Interacts with TIMP1, TIMP2 and TIMP3. Binds (via the C-terminal region) to collagen. Ca(2+) is required as a cofactor. Zn(2+) serves as cofactor. Post-translationally, the proenzyme is activated by removal of the propeptide; this cleavage can be effected by other matrix metalloproteinases, such as MMP2, MMP3 and MMP14 and may involve several cleavage steps. Cleavage can also be autocatalytic, after partial maturation by another protease or after treatment with 4-aminophenylmercuric acetate (APMA) (in vitro). In terms of processing, N-glycosylated. Tyrosine phosphorylated by PKDCC/VLK. As to expression, detected in fetal cartilage and calvaria, in chondrocytes of hypertrophic cartilage in vertebrae and in the dorsal end of ribs undergoing ossification, as well as in osteoblasts and periosteal cells below the inner periosteal region of ossified ribs. Detected in chondrocytes from in joint cartilage that have been treated with TNF and IL1B, but not in untreated chondrocytes. Detected in T lymphocytes. Detected in breast carcinoma tissue.

Its subcellular location is the secreted. The protein localises to the extracellular space. It is found in the extracellular matrix. Its activity is regulated as follows. Inhibited by TIMP1, TIMP2 and TIMP3. Inhibited by acetohydroxamic acid and other zinc chelators. Its function is as follows. Plays a role in the degradation of extracellular matrix proteins including fibrillar collagen, fibronectin, TNC and ACAN. Cleaves triple helical collagens, including type I, type II and type III collagen, but has the highest activity with soluble type II collagen. Can also degrade collagen type IV, type XIV and type X. May also function by activating or degrading key regulatory proteins, such as TGFB1 and CCN2. Plays a role in wound healing, tissue remodeling, cartilage degradation, bone development, bone mineralization and ossification. Required for normal embryonic bone development and ossification. Plays a role in the healing of bone fractures via endochondral ossification. Plays a role in wound healing, probably by a mechanism that involves proteolytic activation of TGFB1 and degradation of CCN2. Plays a role in keratinocyte migration during wound healing. May play a role in cell migration and in tumor cell invasion. The protein is Collagenase 3 (MMP13) of Homo sapiens (Human).